Here is a 429-residue protein sequence, read N- to C-terminus: Histidine--tRNA ligase (429 aa).

The protein belongs to the class-II aminoacyl-tRNA synthetase family. Homodimer.

The protein resides in the cytoplasm. It carries out the reaction tRNA(His) + L-histidine + ATP = L-histidyl-tRNA(His) + AMP + diphosphate + H(+). The chain is Histidine--tRNA ligase from Streptococcus pneumoniae (strain P1031).